Here is a 258-residue protein sequence, read N- to C-terminus: Ubiquinone/menaquinone biosynthesis C-methyltransferase UbiE (258 aa).

A disordered region spans residues 1-21 (MSESRTSADGGMETSYGFREV). S-adenosyl-L-methionine is bound by residues Thr81, Asp102, and 130–131 (NA).

It belongs to the class I-like SAM-binding methyltransferase superfamily. MenG/UbiE family.

The catalysed reaction is a 2-demethylmenaquinol + S-adenosyl-L-methionine = a menaquinol + S-adenosyl-L-homocysteine + H(+). The enzyme catalyses a 2-methoxy-6-(all-trans-polyprenyl)benzene-1,4-diol + S-adenosyl-L-methionine = a 5-methoxy-2-methyl-3-(all-trans-polyprenyl)benzene-1,4-diol + S-adenosyl-L-homocysteine + H(+). The protein operates within quinol/quinone metabolism; menaquinone biosynthesis; menaquinol from 1,4-dihydroxy-2-naphthoate: step 2/2. Its pathway is cofactor biosynthesis; ubiquinone biosynthesis. Methyltransferase required for the conversion of demethylmenaquinol (DMKH2) to menaquinol (MKH2) and the conversion of 2-polyprenyl-6-methoxy-1,4-benzoquinol (DDMQH2) to 2-polyprenyl-3-methyl-6-methoxy-1,4-benzoquinol (DMQH2). This is Ubiquinone/menaquinone biosynthesis C-methyltransferase UbiE from Rhizobium johnstonii (strain DSM 114642 / LMG 32736 / 3841) (Rhizobium leguminosarum bv. viciae).